Here is a 60-residue protein sequence, read N- to C-terminus: Large ribosomal subunit protein bL33 (60 aa).

It belongs to the bacterial ribosomal protein bL33 family.

This chain is Large ribosomal subunit protein bL33, found in Flavobacterium psychrophilum (strain ATCC 49511 / DSM 21280 / CIP 103535 / JIP02/86).